A 445-amino-acid chain; its full sequence is Probable D-serine dehydratase (445 aa).

Lys-111 is modified (N6-(pyridoxal phosphate)lysine).

This sequence belongs to the serine/threonine dehydratase family. DsdA subfamily. Requires pyridoxal 5'-phosphate as cofactor.

The catalysed reaction is D-serine = pyruvate + NH4(+). The sequence is that of Probable D-serine dehydratase from Burkholderia pseudomallei (strain 668).